Here is a 368-residue protein sequence, read N- to C-terminus: uncharacterized protein (368 aa).

Helical transmembrane passes span 22–42 (VAGI…FTLI), 74–94 (FVKP…LLVL), 104–124 (FLKT…LNLF), 144–164 (VGDF…GASL), and 168–188 (WGVN…AVSL).

This sequence belongs to the MscS (TC 1.A.23) family.

It is found in the cell membrane. This is an uncharacterized protein from Aquifex aeolicus (strain VF5).